The primary structure comprises 255 residues: Methylthioribulose-1-phosphate dehydratase (255 aa).

Cys98 is a substrate binding site. His116 and His118 together coordinate Zn(2+). Glu150 (proton donor/acceptor) is an active-site residue. His207 is a binding site for Zn(2+).

It belongs to the aldolase class II family. MtnB subfamily. Zn(2+) is required as a cofactor.

Its subcellular location is the cytoplasm. The enzyme catalyses 5-(methylsulfanyl)-D-ribulose 1-phosphate = 5-methylsulfanyl-2,3-dioxopentyl phosphate + H2O. It participates in amino-acid biosynthesis; L-methionine biosynthesis via salvage pathway; L-methionine from S-methyl-5-thio-alpha-D-ribose 1-phosphate: step 2/6. Catalyzes the dehydration of methylthioribulose-1-phosphate (MTRu-1-P) into 2,3-diketo-5-methylthiopentyl-1-phosphate (DK-MTP-1-P). In Pyricularia oryzae (strain 70-15 / ATCC MYA-4617 / FGSC 8958) (Rice blast fungus), this protein is Methylthioribulose-1-phosphate dehydratase.